The sequence spans 316 residues: Acetylglutamate kinase (316 aa).

Substrate is bound by residues 76–77, arginine 98, and asparagine 207; that span reads GG.

Belongs to the acetylglutamate kinase family. ArgB subfamily.

It is found in the cytoplasm. It catalyses the reaction N-acetyl-L-glutamate + ATP = N-acetyl-L-glutamyl 5-phosphate + ADP. It functions in the pathway amino-acid biosynthesis; L-arginine biosynthesis; N(2)-acetyl-L-ornithine from L-glutamate: step 2/4. Functionally, catalyzes the ATP-dependent phosphorylation of N-acetyl-L-glutamate. The polypeptide is Acetylglutamate kinase (Paenarthrobacter aurescens (strain TC1)).